Consider the following 280-residue polypeptide: Monoacylglycerol lipase (280 aa).

Residue Ser-111 is the Nucleophile of the active site. Residues Asp-227 and His-257 each act as charge relay system in the active site.

The protein belongs to the AB hydrolase superfamily.

It is found in the secreted. Its subcellular location is the cell wall. The catalysed reaction is Hydrolyzes glycerol monoesters of long-chain fatty acids.. Its function is as follows. Contributes to cell growth, probably by hydrolyzing exogenous lipids. Catalyzes the hydrolysis of monoacylglycerols (MAG) with fatty acid chains ranging from C14 to C18, with a maximum activity on monoolein. Is unable to hydrolyze long-chain diacylglycerol (DAG). The chain is Monoacylglycerol lipase from Mycolicibacterium smegmatis (strain ATCC 700084 / mc(2)155) (Mycobacterium smegmatis).